The sequence spans 176 residues: Small ribosomal subunit protein bS6 (176 aa).

Residues 97–176 (DQYTPNDSPP…VEPVDTTSEE (80 aa)) form a disordered region. A compositionally biased stretch (low complexity) spans 140–160 (AVETVEPPAEPAEPVEAVETV). Residues 161–176 (DTTEETVEPVDTTSEE) show a composition bias toward acidic residues.

Belongs to the bacterial ribosomal protein bS6 family.

Binds together with bS18 to 16S ribosomal RNA. In Gloeothece citriformis (strain PCC 7424) (Cyanothece sp. (strain PCC 7424)), this protein is Small ribosomal subunit protein bS6.